The sequence spans 360 residues: UDP-3-O-acylglucosamine N-acyltransferase (360 aa).

Residue histidine 256 is the Proton acceptor of the active site. The interval 341–360 (EGSGAETAARPDDDRDEGRG) is disordered. The span at 349-360 (ARPDDDRDEGRG) shows a compositional bias: basic and acidic residues.

It belongs to the transferase hexapeptide repeat family. LpxD subfamily. Homotrimer.

The catalysed reaction is a UDP-3-O-[(3R)-3-hydroxyacyl]-alpha-D-glucosamine + a (3R)-hydroxyacyl-[ACP] = a UDP-2-N,3-O-bis[(3R)-3-hydroxyacyl]-alpha-D-glucosamine + holo-[ACP] + H(+). Its pathway is bacterial outer membrane biogenesis; LPS lipid A biosynthesis. In terms of biological role, catalyzes the N-acylation of UDP-3-O-acylglucosamine using 3-hydroxyacyl-ACP as the acyl donor. Is involved in the biosynthesis of lipid A, a phosphorylated glycolipid that anchors the lipopolysaccharide to the outer membrane of the cell. The polypeptide is UDP-3-O-acylglucosamine N-acyltransferase (Rhodopseudomonas palustris (strain TIE-1)).